The primary structure comprises 181 residues: Oligoribonuclease (181 aa).

Residues 8–171 (LIWIDLEMTG…QDIQESIAEL (164 aa)) form the Exonuclease domain. The active site involves Tyr129.

This sequence belongs to the oligoribonuclease family.

It localises to the cytoplasm. Functionally, 3'-to-5' exoribonuclease specific for small oligoribonucleotides. The sequence is that of Oligoribonuclease from Shewanella baltica (strain OS155 / ATCC BAA-1091).